A 423-amino-acid chain; its full sequence is MEKNNSAKRGQQDGNQQSAQPEKVGWVRKFCGKGIFREIWKNRYVVLKGDQLYISEKEVKDEKNVQEAFDLSDYEKCEELRKSKSRSKKNHSKFTLAHSRQPGNMAPNLIFLAVSPEEKESWINALNSAITRAKNRILDEVTVEEDSYLAHPTRDRAKIQHSRRPPTRGHLMAVASTSTSDGMLTLDLIQEEDASPEEHSTCEESFRVDLDKSVAQLAAGRRRSDSENVKLSEKGRSGTLPRHEVTSWDKPTQRKDSLDKGTVYTPQVPKKLSHSEKNKCASMEEILSRRDSAHRAVLRRGLEAHCTAAEPEQLSRLQELVALKLEKTQELLTEVKGYGEGKRKVKDCATSTTTSSSSSSSRSDCERILQESERLLGEASSTWSQARRVLQEVRELRDLYRQIELQQVDCNPKQSSQYRKSMM.

Disordered regions lie at residues 1–21, 81–100, and 217–277; these read MEKN…SAQP, RKSK…AHSR, and LAAG…HSEK. A compositionally biased stretch (polar residues) spans 7-20; it reads AKRGQQDGNQQSAQ. The 112-residue stretch at 20–131 folds into the PH domain; the sequence is QPEKVGWVRK…WINALNSAIT (112 aa). Residues 83–92 show a composition bias toward basic residues; sequence SKSRSKKNHS. Residues 222–259 are compositionally biased toward basic and acidic residues; it reads RRSDSENVKLSEKGRSGTLPRHEVTSWDKPTQRKDSLD.

Post-translationally, C-terminal fragments could be released during apoptosis via caspase-3-dependent cleavage.

The protein localises to the membrane. It is found in the nucleus. It localises to the cytoplasm. In terms of biological role, plays a role in the regulation of the actin cytoskeleton through its interactions with actin capping protein (CP). This chain is Pleckstrin homology domain-containing family O member 1 (PLEKHO1), found in Gallus gallus (Chicken).